A 197-amino-acid polypeptide reads, in one-letter code: Protein GrpE (197 aa).

The span at 1–31 shows a compositional bias: basic and acidic residues; the sequence is MSDDTKKQDTAADAEVEKEMEGVPEHLRDDR. The interval 1 to 48 is disordered; the sequence is MSDDTKKQDTAADAEVEKEMEGVPEHLRDDRGSEEDASDDLSAALESL.

Belongs to the GrpE family. Homodimer.

The protein resides in the cytoplasm. In terms of biological role, participates actively in the response to hyperosmotic and heat shock by preventing the aggregation of stress-denatured proteins, in association with DnaK and GrpE. It is the nucleotide exchange factor for DnaK and may function as a thermosensor. Unfolded proteins bind initially to DnaJ; upon interaction with the DnaJ-bound protein, DnaK hydrolyzes its bound ATP, resulting in the formation of a stable complex. GrpE releases ADP from DnaK; ATP binding to DnaK triggers the release of the substrate protein, thus completing the reaction cycle. Several rounds of ATP-dependent interactions between DnaJ, DnaK and GrpE are required for fully efficient folding. The chain is Protein GrpE from Erythrobacter litoralis (strain HTCC2594).